The primary structure comprises 1025 residues: Dihydropyrimidine dehydrogenase [NADP(+)] (1025 aa).

The propeptide occupies 1 to 3; it reads MAP. In terms of domain architecture, 4Fe-4S ferredoxin-type 1 spans 69-100; sequence ERGALREAMRCLKCADAPCQKSCPTHLDIKSF. [4Fe-4S] cluster is bound by residues Cys79, Cys82, Cys87, and Cys91. Val129 provides a ligand contact to FAD. [4Fe-4S] cluster is bound by residues Cys130, Cys136, Cys140, and Gln156. FAD-binding positions include 194–198, 218–226, Arg235, and Leu261; these read GAGPA and EKQEYVGGL. NADP(+) is bound by residues 340-343, 364-365, and Arg371; these read AGDT and RK. Position 384 is an N6-acetyllysine (Lys384). NADP(+) is bound by residues 437–439 and 481–487; these read AFG and DIVGMAN. 480 to 489 serves as a coordination point for FAD; sequence GDIVGMANTT. Residues Ser550 and 574–575 each bind FMN; that span reads KT. Substrate-binding positions include Asn609 and 668-670; that span reads NLS. Cys671 acts as the Proton acceptor in catalysis. FMN is bound at residue Lys709. 736–737 lines the substrate pocket; that stretch reads NT. FMN contacts are provided by residues Gly767, 793-795, and 816-817; these read TGG and CS. 4Fe-4S ferredoxin-type domains are found at residues 944-976 and 978-1007; these read VVAV…FDPE and HLPT…MVSR. Cys953, Cys956, Cys959, Cys963, Cys986, Cys989, Cys992, and Cys996 together coordinate [4Fe-4S] cluster.

It belongs to the dihydropyrimidine dehydrogenase family. As to quaternary structure, homodimer. Requires FAD as cofactor. The cofactor is FMN. It depends on [4Fe-4S] cluster as a cofactor.

Its subcellular location is the cytoplasm. It carries out the reaction 5,6-dihydrouracil + NADP(+) = uracil + NADPH + H(+). The catalysed reaction is 5,6-dihydrothymine + NADP(+) = thymine + NADPH + H(+). The protein operates within amino-acid biosynthesis; beta-alanine biosynthesis. With respect to regulation, inactivated by 5-iodouracil. Functionally, involved in pyrimidine base degradation. Catalyzes the reduction of uracil and thymine. The protein is Dihydropyrimidine dehydrogenase [NADP(+)] (DPYD) of Sus scrofa (Pig).